Consider the following 107-residue polypeptide: Nucleoid-associated protein YaaK (107 aa).

The segment at Met1 to Lys24 is disordered. Low complexity predominate over residues Met8–Lys17.

It belongs to the YbaB/EbfC family. As to quaternary structure, homodimer.

It localises to the cytoplasm. The protein resides in the nucleoid. Functionally, binds to DNA and alters its conformation. May be involved in regulation of gene expression, nucleoid organization and DNA protection. The chain is Nucleoid-associated protein YaaK (yaaK) from Bacillus subtilis (strain 168).